Reading from the N-terminus, the 136-residue chain is DNA-directed RNA polymerase subunit omega (136 aa).

The segment at E81–D136 is disordered. Positions E83–P99 are enriched in low complexity. Residues Q109–R120 are compositionally biased toward basic and acidic residues.

Belongs to the RNA polymerase subunit omega family. As to quaternary structure, the RNAP catalytic core consists of 2 alpha, 1 beta, 1 beta' and 1 omega subunit. When a sigma factor is associated with the core the holoenzyme is formed, which can initiate transcription.

The enzyme catalyses RNA(n) + a ribonucleoside 5'-triphosphate = RNA(n+1) + diphosphate. Its function is as follows. Promotes RNA polymerase assembly. Latches the N- and C-terminal regions of the beta' subunit thereby facilitating its interaction with the beta and alpha subunits. In Methylobacterium nodulans (strain LMG 21967 / CNCM I-2342 / ORS 2060), this protein is DNA-directed RNA polymerase subunit omega.